The chain runs to 107 residues: Ferredoxin-1 (107 aa).

4Fe-4S ferredoxin-type domains are found at residues 2 to 30 (AFVV…YEGP) and 31 to 60 (NFLV…SEDE). 2 residues coordinate [3Fe-4S] cluster: Cys9 and Cys17. [4Fe-4S] cluster-binding residues include Cys21, Cys40, Cys43, and Cys46. Residue Cys50 participates in [3Fe-4S] cluster binding. Residues 84–107 (EKKDPLPDAEDWDGVKGKLQHLER) form a disordered region. A compositionally biased stretch (basic and acidic residues) spans 96–107 (DGVKGKLQHLER).

Requires [4Fe-4S] cluster as cofactor. [3Fe-4S] cluster serves as cofactor.

In terms of biological role, ferredoxins are iron-sulfur proteins that transfer electrons in a wide variety of metabolic reactions. This ferredoxin could play a role in regulating gene expression by interacting directly with DNA. This is Ferredoxin-1 (fdxA) from Azotobacter vinelandii.